The primary structure comprises 38 residues: Tyrosinase inhibitor (38 aa).

3 disulfide bridges follow: cysteine 11–cysteine 25, cysteine 18–cysteine 29, and cysteine 24–cysteine 36. Tyrosine 32 carries the 3',4'-dihydroxyphenylalanine modification.

In terms of assembly, monomer. Post-translationally, contains L-DOPA (3',4'-dihydroxyphenylalanine).

The protein resides in the secreted. Its function is as follows. Potent reversible, competitive inhibitor of tyrosinase (phenol oxidase) in the nanomolar range. The polypeptide is Tyrosinase inhibitor (Musca domestica (House fly)).